The chain runs to 58 residues: UPF0391 membrane protein Bxeno_A2959 (58 aa).

2 consecutive transmembrane segments (helical) span residues 4–24 and 33–53; these read WALFFAVVAVIAGVLGFTGVA and FLFIVFVILCVVFLVLGFVVT.

This sequence belongs to the UPF0391 family.

Its subcellular location is the cell membrane. This Paraburkholderia xenovorans (strain LB400) protein is UPF0391 membrane protein Bxeno_A2959.